Reading from the N-terminus, the 469-residue chain is SHC-transforming protein 1 (469 aa).

The interval methionine 1 to arginine 26 is disordered. Serine 29 bears the Phosphoserine mark. Lysine 44 carries the post-translational modification N6-acetyllysine. A PID domain is found at methionine 46–glutamate 229. Residues glutamate 230–serine 373 are CH1. Phosphotyrosine is present on residues tyrosine 239, tyrosine 240, and tyrosine 313. Residues alanine 322 to leucine 344 are disordered. Position 339 is a phosphoserine (serine 339). The SH2 domain occupies tryptophan 374–valine 465.

Interacts with CPNE3; this interaction may mediate the binding of CPNE3 with ERBB2. Interacts with the NPXY motif of tyrosine-phosphorylated IGF1R and INSR in vitro via the PID domain. Once activated, binds to GRB2. Interacts with tyrosine-phosphorylated CD3T and DDR2. Interacts with the N-terminal region of APS. Interacts with phosphorylated LRP1 and IRS4. Interacts with INPP5D/SHIP1 and INPPL1/SHIP2. Interacts with ALK, GAB2, GRB7 and KIT. Interacts with PTPN6/SHP (tyrosine phosphorylated). Identified in a complex containing FGFR4, NCAM1, CDH2, PLCG1, FRS2A, SRC, SHC1, GAP43 and CTTN. Interacts with EPHB1 and GRB2; activates the MAPK/ERK cascade to regulate cell migration. Interacts with PDGFRB (tyrosine-phosphorylated). Interacts with ERBB4. Interacts with TEK/TIE2 (tyrosine-phosphorylated). Interacts with PTK2/FAK1. Interacts with FLT4 (tyrosine-phosphorylated). Interacts with the Trk receptors NTRK1, NTRK2 and NTRK3; in a phosphotyrosine-dependent manner. Interacts with CEACAM1; this interaction is CEACAM1-phosphorylation-dependent and mediates interaction with EGFR or INSR resulting in decrease coupling of SHC1 to the MAPK3/ERK1-MAPK1/ERK2 pathway. Interacts (via PID domain) with PEAK1 (when phosphorylated). Found in a complex with PPP1CA, PPP1CC, SHC1 and PEAK1. In terms of processing, phosphorylated by activated epidermal growth factor receptor. Phosphorylated in response to KIT signaling. Tyrosine phosphorylated in response to FLT3 signaling and by ligand-activated ALK. Tyrosine phosphorylated by TEK/TIE2. Tyrosine phosphorylated by ligand-activated PDGFRB. May be tyrosine phosphorylated by activated PTK2/FAK1. Dephosphorylation by PTPN2 may regulate interaction with GRB2. Phosphorylated in response to FLT4 signaling. Tyrosine phosphorylated by activated PTK2B/PYK2.

It localises to the cytoplasm. Its subcellular location is the cell junction. The protein localises to the focal adhesion. Its function is as follows. Signaling adapter that couples activated growth factor receptors to signaling pathways. Participates in a signaling cascade initiated by activated KIT and KITLG/SCF. Participates in signaling downstream of the angiopoietin receptor TEK/TIE2, and plays a role in the regulation of endothelial cell migration and sprouting angiogenesis. This is SHC-transforming protein 1 (Shc1) from Rattus norvegicus (Rat).